Here is a 245-residue protein sequence, read N- to C-terminus: MLHFIQKVSGASSKMLKNPFTVRLGAGRIDILSLKTCLLQNFSSLPPRTWLSPSFQVCMRKIQCYHVSPCNFKKQKAVLPPKKRSTITYLLDSPKPALYITLAGLIPFTAPPLLMVITKSYIPVLAFTQMAYGAGFLAFLGGIRWGFVLPESSPAKPDYINLASSMSPILFSWAAILFSERLNEAIVTLIIGLGIALHNELFLLPHYPNWFKALRIVSTLVAFISFVVTLILENIYPEKGPKRPD.

The next 5 helical transmembrane spans lie at 97–117 (ALYITLAGLIPFTAPPLLMVI), 122–142 (IPVLAFTQMAYGAGFLAFLGG), 159–179 (YINLASSMSPILFSWAAILFS), 185–205 (AIVTLIIGLGIALHNELFLLP), and 216–236 (IVSTLVAFISFVVTLILENIY).

Its subcellular location is the membrane. The protein is Transmembrane protein 69 (Tmem69) of Mus musculus (Mouse).